A 551-amino-acid chain; its full sequence is Serine/threonine-protein kinase ppk21 (551 aa).

Positions Glu-24 to Thr-43 are disordered. In terms of domain architecture, Protein kinase spans Tyr-55–Phe-315. ATP is bound by residues Ser-65–Ser-67 and Lys-84. The PIF-pocket stretch occupies residues Leu-86–Tyr-131. ATP is bound by residues Glu-134–Ala-136 and Glu-140. Residue Asp-179 is the Proton acceptor of the active site. ATP is bound by residues Glu-183 and Asp-197. A Phosphoserine; by autocatalysis modification is found at Ser-220. Position 538 is a phosphoserine (Ser-538).

The protein belongs to the protein kinase superfamily. AGC Ser/Thr protein kinase family. PDPK1 subfamily.

It localises to the cytoplasm. Its subcellular location is the nucleus. The protein localises to the cytoskeleton. The protein resides in the microtubule organizing center. It is found in the spindle pole body. It catalyses the reaction L-seryl-[protein] + ATP = O-phospho-L-seryl-[protein] + ADP + H(+). The catalysed reaction is L-threonyl-[protein] + ATP = O-phospho-L-threonyl-[protein] + ADP + H(+). The sequence is that of Serine/threonine-protein kinase ppk21 (ppk21) from Schizosaccharomyces pombe (strain 972 / ATCC 24843) (Fission yeast).